The chain runs to 385 residues: Proliferation-associated protein A (385 aa).

This sequence belongs to the peptidase M24 family.

This is Proliferation-associated protein A (prlA) from Dictyostelium discoideum (Social amoeba).